The primary structure comprises 365 residues: Phospho-N-acetylmuramoyl-pentapeptide-transferase (365 aa).

A run of 10 helical transmembrane segments spans residues 22 to 42 (YISV…LALG), 74 to 94 (TMGG…WGDL), 95 to 115 (TSIY…IGFF), 134 to 154 (KFAL…YLLS), 168 to 188 (SLYI…IING), 201 to 221 (GLAI…AYIE), 240 to 260 (LAEV…FLWF), 267 to 287 (VFMG…IAVM), 292 to 312 (LIFF…MLQV), and 342 to 362 (KVVI…LAAI).

The protein belongs to the glycosyltransferase 4 family. MraY subfamily. It depends on Mg(2+) as a cofactor.

The protein resides in the cell inner membrane. The enzyme catalyses UDP-N-acetyl-alpha-D-muramoyl-L-alanyl-gamma-D-glutamyl-meso-2,6-diaminopimeloyl-D-alanyl-D-alanine + di-trans,octa-cis-undecaprenyl phosphate = di-trans,octa-cis-undecaprenyl diphospho-N-acetyl-alpha-D-muramoyl-L-alanyl-D-glutamyl-meso-2,6-diaminopimeloyl-D-alanyl-D-alanine + UMP. It participates in cell wall biogenesis; peptidoglycan biosynthesis. Its function is as follows. Catalyzes the initial step of the lipid cycle reactions in the biosynthesis of the cell wall peptidoglycan: transfers peptidoglycan precursor phospho-MurNAc-pentapeptide from UDP-MurNAc-pentapeptide onto the lipid carrier undecaprenyl phosphate, yielding undecaprenyl-pyrophosphoryl-MurNAc-pentapeptide, known as lipid I. This Francisella tularensis subsp. mediasiatica (strain FSC147) protein is Phospho-N-acetylmuramoyl-pentapeptide-transferase.